Reading from the N-terminus, the 389-residue chain is Nucleic acid dioxygenase ALKBH1 (389 aa).

The segment at 1–127 (MGKMAAAVAS…CLKLYSQKPN (127 aa)) is interaction with DNAJB6. The segment at 86 to 389 (SKWRAYGLEG…VKRKRLNPNS (304 aa)) is tRNA-binding. Residues tryptophan 144 and 175 to 177 (YHY) each bind substrate. The Fe2OG dioxygenase domain occupies 213-347 (QAEAGILNYY…RVNMTVRQVL (135 aa)). 220–222 (NYY) serves as a coordination point for 2-oxoglutarate. 3 residues coordinate Fe cation: histidine 231, aspartate 233, and histidine 287. Residue aspartate 233 coordinates substrate. Residue 338 to 344 (RVNMTVR) participates in 2-oxoglutarate binding.

As to quaternary structure, monomer. Interacts with DNAJB6. Requires Fe(2+) as cofactor. In adult organs, highly expressed in testis, eye, brain and kidney.

It is found in the nucleus. It catalyses the reaction an N(6)-methyl-2'-deoxyadenosine in DNA + 2-oxoglutarate + O2 = a 2'-deoxyadenosine in DNA + formaldehyde + succinate + CO2. The enzyme catalyses 2'-deoxyribonucleotide-(2'-deoxyribose 5'-phosphate)-2'-deoxyribonucleotide-DNA = a 3'-end 2'-deoxyribonucleotide-(2,3-dehydro-2,3-deoxyribose 5'-phosphate)-DNA + a 5'-end 5'-phospho-2'-deoxyribonucleoside-DNA + H(+). It carries out the reaction a methylated nucleobase within DNA + 2-oxoglutarate + O2 = a nucleobase within DNA + formaldehyde + succinate + CO2. The catalysed reaction is an N(1)-methyladenosine in tRNA + 2-oxoglutarate + O2 = an adenosine in tRNA + formaldehyde + succinate + CO2. It catalyses the reaction 5-methylcytidine(34) in mitochondrial tRNA(Met) + 2 2-oxoglutarate + 2 O2 = 5-formylcytidine(34) in mitochondrial tRNA(Met) + 2 succinate + 2 CO2 + H2O. The enzyme catalyses an N(3)-methylcytidine in mRNA + 2-oxoglutarate + O2 = a cytidine in mRNA + formaldehyde + succinate + CO2. It carries out the reaction N(1)-methyladenosine(58) in tRNA + 2-oxoglutarate + O2 = adenosine(58) in tRNA + formaldehyde + succinate + CO2. Functionally, dioxygenase that acts on nucleic acids, such as DNA and tRNA. Requires molecular oxygen, alpha-ketoglutarate and iron. A number of activities have been described for this dioxygenase, but recent results suggest that it mainly acts on tRNAs and mediates their demethylation or oxidation depending on the context and subcellular compartment. Mainly acts as a tRNA demethylase by removing N(1)-methyladenine from various tRNAs, with a preference for N(1)-methyladenine at position 58 (m1A58) present on a stem loop structure of tRNAs. Acts as a regulator of translation initiation and elongation in response to glucose deprivation: regulates both translation initiation, by mediating demethylation of tRNA(Met), and translation elongation, N(1)-methyladenine-containing tRNAs being preferentially recruited to polysomes to promote translation elongation. In mitochondrion, specifically interacts with mt-tRNA(Met) and mediates oxidation of mt-tRNA(Met) methylated at cytosine(34) to form 5-formylcytosine (f(5)c) at this position. mt-tRNA(Met) containing the f(5)c modification at the wobble position enables recognition of the AUA codon in addition to the AUG codon, expanding codon recognition in mitochondrial translation. Specifically demethylates DNA methylated on the 6th position of adenine (N(6)-methyladenosine) DNA. N(6)-methyladenosine (m6A) DNA is present at some L1 elements in embryonic stem cells and probably promotes their silencing. Demethylates mRNAs containing N(3)-methylcytidine modification. Also able to repair alkylated single-stranded DNA by oxidative demethylation, but with low activity. Also has DNA lyase activity and introduces double-stranded breaks at abasic sites: cleaves both single-stranded DNA and double-stranded DNA at abasic sites, with the greatest activity towards double-stranded DNA with two abasic sites. DNA lyase activity does not require alpha-ketoglutarate and iron and leads to the formation of an irreversible covalent protein-DNA adduct with the 5' DNA product. DNA lyase activity is not required during base excision repair and class switch recombination of the immunoglobulin heavy chain during B lymphocyte activation. May play a role in placental trophoblast lineage differentiation. This is Nucleic acid dioxygenase ALKBH1 from Mus musculus (Mouse).